The chain runs to 242 residues: Transcription factor bHLH100 (242 aa).

In terms of domain architecture, bHLH spans 61–113; it reads MKKLNHNASERERRKKINTMFSSLRSCLPPTNQTKKLSVSATVSQALKYIPEL.

In terms of assembly, homodimer. Expressed constitutively in roots, leaves, and stems.

The protein resides in the nucleus. In terms of biological role, plays a role in metal homeostasis. Confers tolerance to high zinc (Zn) and nickel (Ni). The sequence is that of Transcription factor bHLH100 (BHLH100) from Arabidopsis thaliana (Mouse-ear cress).